The chain runs to 366 residues: Apolipoprotein A-V (366 aa).

The N-terminal stretch at 1 to 23 (MASMAAVLTWALALLSAFSATQA) is a signal peptide. 2 coiled-coil regions span residues 54–157 (ATLK…VGED) and 236–262 (TLKA…RAFA). A Phosphothreonine; by FAM20C modification is found at T55. A Phosphoserine modification is found at S59.

It belongs to the apolipoprotein A1/A4/E family. Interacts with GPIHBP1. Interacts with SORL1; this interaction leads to APOA5 internalization and sorting either to lysosomes and degradation, or to the trans-Golgi network. Post-translationally, phosphorylated by FAM20C in the extracellular medium. As to expression, liver and plasma.

Its subcellular location is the secreted. It is found in the early endosome. The protein localises to the late endosome. It localises to the golgi apparatus. The protein resides in the trans-Golgi network. Its function is as follows. Minor apolipoprotein mainly associated with HDL and to a lesser extent with VLDL. May also be associated with chylomicrons. Important determinant of plasma triglyceride (TG) levels by both being a potent stimulator of apo-CII lipoprotein lipase (LPL) TG hydrolysis and an inhibitor of the hepatic VLDL-TG production rate (without affecting the VLDL-apoB production rate). Activates poorly lecithin:cholesterol acyltransferase (LCAT) and does not enhance efflux of cholesterol from macrophages. Binds heparin. The chain is Apolipoprotein A-V (APOA5) from Homo sapiens (Human).